The primary structure comprises 234 residues: Transcription factor UDT1 (234 aa).

The disordered stretch occupies residues Met1–Gln51. The segment covering Gly37–Gln48 has biased composition (acidic residues). The basic motif; degenerate stretch occupies residues Glu61–Arg74. Residues Glu61–Leu110 enclose the bHLH domain. A helix-loop-helix motif region spans residues Gly75–Leu110.

The protein belongs to the bHLH protein family.

The protein localises to the nucleus. Functionally, transcription factor that plays a crucial role in tapetum development. Required for male fertility and pollen differentiation within the developing anther. Plays a major role in maintaining tapetum development, starting in early meiosis. Required for pollen mother cell meiosis. May regulate the anther-specific cysteine protease CP1 and lipid-transfer proteins C4 and C6. Required for anther development. Functions in parallel with GAMYB to regulate early anther development. Functions upstream of the transcription factor TDR and may positively regulate its transcription. The chain is Transcription factor UDT1 from Oryza sativa subsp. japonica (Rice).